A 527-amino-acid chain; its full sequence is Peptide chain release factor 3 (527 aa).

One can recognise a tr-type G domain in the interval 9–277 (AKRRTFAIIS…AVVNWAPMPL (269 aa)). GTP contacts are provided by residues 18-25 (SHPDAGKT), 86-90 (DTPGH), and 140-143 (NKLD).

This sequence belongs to the TRAFAC class translation factor GTPase superfamily. Classic translation factor GTPase family. PrfC subfamily.

The protein resides in the cytoplasm. In terms of biological role, increases the formation of ribosomal termination complexes and stimulates activities of RF-1 and RF-2. It binds guanine nucleotides and has strong preference for UGA stop codons. It may interact directly with the ribosome. The stimulation of RF-1 and RF-2 is significantly reduced by GTP and GDP, but not by GMP. This Pseudomonas syringae pv. tomato (strain ATCC BAA-871 / DC3000) protein is Peptide chain release factor 3.